Consider the following 212-residue polypeptide: 2,3-bisphosphoglycerate-dependent phosphoglycerate mutase (212 aa).

Residues 9–16 (RHGQSEWN), 22–23 (TG), arginine 61, 88–91 (ERDY), lysine 99, 115–116 (RR), and 159–160 (GN) contribute to the substrate site. Histidine 10 functions as the Tele-phosphohistidine intermediate in the catalytic mechanism. Glutamate 88 functions as the Proton donor/acceptor in the catalytic mechanism.

This sequence belongs to the phosphoglycerate mutase family. BPG-dependent PGAM subfamily. Homodimer.

It carries out the reaction (2R)-2-phosphoglycerate = (2R)-3-phosphoglycerate. The protein operates within carbohydrate degradation; glycolysis; pyruvate from D-glyceraldehyde 3-phosphate: step 3/5. Its function is as follows. Catalyzes the interconversion of 2-phosphoglycerate and 3-phosphoglycerate. This Methylorubrum populi (strain ATCC BAA-705 / NCIMB 13946 / BJ001) (Methylobacterium populi) protein is 2,3-bisphosphoglycerate-dependent phosphoglycerate mutase.